The following is a 152-amino-acid chain: SsrA-binding protein (152 aa).

It belongs to the SmpB family.

The protein localises to the cytoplasm. Required for rescue of stalled ribosomes mediated by trans-translation. Binds to transfer-messenger RNA (tmRNA), required for stable association of tmRNA with ribosomes. tmRNA and SmpB together mimic tRNA shape, replacing the anticodon stem-loop with SmpB. tmRNA is encoded by the ssrA gene; the 2 termini fold to resemble tRNA(Ala) and it encodes a 'tag peptide', a short internal open reading frame. During trans-translation Ala-aminoacylated tmRNA acts like a tRNA, entering the A-site of stalled ribosomes, displacing the stalled mRNA. The ribosome then switches to translate the ORF on the tmRNA; the nascent peptide is terminated with the 'tag peptide' encoded by the tmRNA and targeted for degradation. The ribosome is freed to recommence translation, which seems to be the essential function of trans-translation. The polypeptide is SsrA-binding protein (Rickettsia africae (strain ESF-5)).